The chain runs to 399 residues: Probable peptidoglycan glycosyltransferase FtsW (399 aa).

Helical transmembrane passes span 33–53 (LVWL…STSI), 71–91 (IFYF…PIIF), 98–118 (IILI…HSIH), 160–180 (FWGF…LLAE), 182–202 (DLGT…LSGA), 204–224 (IGQF…LILL), 287–307 (IIGE…IFTI), 324–344 (IFSG…TSIN), and 359–379 (LPFI…IFFL).

It belongs to the SEDS family. FtsW subfamily.

It localises to the cell inner membrane. It catalyses the reaction [GlcNAc-(1-&gt;4)-Mur2Ac(oyl-L-Ala-gamma-D-Glu-L-Lys-D-Ala-D-Ala)](n)-di-trans,octa-cis-undecaprenyl diphosphate + beta-D-GlcNAc-(1-&gt;4)-Mur2Ac(oyl-L-Ala-gamma-D-Glu-L-Lys-D-Ala-D-Ala)-di-trans,octa-cis-undecaprenyl diphosphate = [GlcNAc-(1-&gt;4)-Mur2Ac(oyl-L-Ala-gamma-D-Glu-L-Lys-D-Ala-D-Ala)](n+1)-di-trans,octa-cis-undecaprenyl diphosphate + di-trans,octa-cis-undecaprenyl diphosphate + H(+). Its pathway is cell wall biogenesis; peptidoglycan biosynthesis. In terms of biological role, peptidoglycan polymerase that is essential for cell division. The protein is Probable peptidoglycan glycosyltransferase FtsW of Buchnera aphidicola subsp. Acyrthosiphon pisum (strain APS) (Acyrthosiphon pisum symbiotic bacterium).